A 465-amino-acid polypeptide reads, in one-letter code: Anthocyanidin 3-O-glucosyltransferase 2 (465 aa).

His22 (proton acceptor) is an active-site residue. 2 residues coordinate an anthocyanidin: His22 and Gln87. The active-site Charge relay is Asp122. Position 145 (Thr145) interacts with UDP-alpha-D-glucose. His154 provides a ligand contact to an anthocyanidin. Ala345, Gln347, His362, Trp365, Asn366, Ser367, and Glu370 together coordinate UDP-alpha-D-glucose. Residue Gly385 participates in an anthocyanidin binding. Residues Asp386 and Gln387 each contribute to the UDP-alpha-D-glucose site.

It belongs to the UDP-glycosyltransferase family. Highest expression detected in fruit, with very low levels detected in petal and leaf.

The enzyme catalyses an anthocyanidin + UDP-alpha-D-glucose + H(+) = an anthocyanidin 3-O-beta-D-glucoside + UDP. It catalyses the reaction pelargonidin + UDP-alpha-D-glucose = pelargonidin 3-O-beta-D-glucoside + UDP. The catalysed reaction is cyanidin + UDP-alpha-D-glucose = cyanidin 3-O-beta-D-glucoside + UDP + H(+). It functions in the pathway pigment biosynthesis; anthocyanin biosynthesis. In the presence of other necessary color factors, this glycosylation reaction allows the accumulation of anthocyanin pigments. Anthocyanidins are the preferred substrates, while flavonols are only a minor substrate in vitro. The polypeptide is Anthocyanidin 3-O-glucosyltransferase 2 (Fragaria ananassa (Strawberry)).